A 211-amino-acid polypeptide reads, in one-letter code: Pyridoxine/pyridoxamine 5'-phosphate oxidase (211 aa).

Substrate-binding positions include Arg-7 to Tyr-10 and Lys-65. Residues Arg-60 to Lys-65, Tyr-75 to Thr-76, Arg-81, Lys-82, and Gln-104 contribute to the FMN site. Substrate contacts are provided by Tyr-122, Arg-126, and Ser-130. Residues Gln-139–Ser-140 and Trp-184 contribute to the FMN site. Arg-190–His-192 provides a ligand contact to substrate. Residue Arg-194 coordinates FMN.

The protein belongs to the pyridoxamine 5'-phosphate oxidase family. In terms of assembly, homodimer. It depends on FMN as a cofactor.

It carries out the reaction pyridoxamine 5'-phosphate + O2 + H2O = pyridoxal 5'-phosphate + H2O2 + NH4(+). It catalyses the reaction pyridoxine 5'-phosphate + O2 = pyridoxal 5'-phosphate + H2O2. The protein operates within cofactor metabolism; pyridoxal 5'-phosphate salvage; pyridoxal 5'-phosphate from pyridoxamine 5'-phosphate: step 1/1. It functions in the pathway cofactor metabolism; pyridoxal 5'-phosphate salvage; pyridoxal 5'-phosphate from pyridoxine 5'-phosphate: step 1/1. In terms of biological role, catalyzes the oxidation of either pyridoxine 5'-phosphate (PNP) or pyridoxamine 5'-phosphate (PMP) into pyridoxal 5'-phosphate (PLP). This Aliivibrio fischeri (strain ATCC 700601 / ES114) (Vibrio fischeri) protein is Pyridoxine/pyridoxamine 5'-phosphate oxidase.